Reading from the N-terminus, the 38-residue chain is Defensin-like peptide 3 (38 aa).

Cystine bridges form between C6–C36 and C13–C29.

Produced by the crural gland and detected in venom from the spur located on each male hind leg.

It localises to the secreted. Functionally, does not show antimicrobial, myotoxic, hemolytic and cell-promoting activities. The protein is Defensin-like peptide 3 of Ornithorhynchus anatinus (Duckbill platypus).